Reading from the N-terminus, the 168-residue chain is G/U mismatch-specific DNA glycosylase (168 aa).

The protein belongs to the uracil-DNA glycosylase (UDG) superfamily. TDG/mug family. In terms of assembly, binds DNA as a monomer.

It localises to the cytoplasm. It catalyses the reaction Specifically hydrolyzes mismatched double-stranded DNA and polynucleotides, releasing free uracil.. In terms of biological role, excises ethenocytosine and uracil, which can arise by alkylation or deamination of cytosine, respectively, from the corresponding mispairs with guanine in ds-DNA. It is capable of hydrolyzing the carbon-nitrogen bond between the sugar-phosphate backbone of the DNA and the mispaired base. The complementary strand guanine functions in substrate recognition. Required for DNA damage lesion repair in stationary-phase cells. The chain is G/U mismatch-specific DNA glycosylase from Salmonella paratyphi B (strain ATCC BAA-1250 / SPB7).